The following is a 105-amino-acid chain: Large ribosomal subunit protein uL24 (105 aa).

It belongs to the universal ribosomal protein uL24 family. As to quaternary structure, part of the 50S ribosomal subunit.

Its function is as follows. One of two assembly initiator proteins, it binds directly to the 5'-end of the 23S rRNA, where it nucleates assembly of the 50S subunit. Functionally, one of the proteins that surrounds the polypeptide exit tunnel on the outside of the subunit. The polypeptide is Large ribosomal subunit protein uL24 (Anaplasma marginale (strain St. Maries)).